Reading from the N-terminus, the 114-residue chain is DNA polymerase epsilon subunit C (114 aa).

The interval 91-114 (PDAVAPATGEEEQPKRRGRKPAQE) is disordered.

In terms of assembly, heterotetramer. Consists of four subunits: POL2, DPB2, DPB3 and DPB4.

It is found in the nucleus. Functionally, as accessory component of the DNA polymerase epsilon (DNA polymerase II) participates in chromosomal DNA replication. The sequence is that of DNA polymerase epsilon subunit C (DPB3) from Yarrowia lipolytica (strain CLIB 122 / E 150) (Yeast).